A 740-amino-acid polypeptide reads, in one-letter code: Ribulose bisphosphate carboxylase, chloroplastic (740 aa).

The N-terminal 55 residues, 1–55 (MPSSSFTTGLALGAGALVGANAFVAPTAKTTNLRAPTQEASLQVAASQQTEQPAP), are a transit peptide targeting the chloroplast. A helical transmembrane segment spans residues 56–76 (STSALPWAFGAGACLALAAGG). Asparagine 213 is a substrate binding site. The active-site Proton acceptor is the lysine 268. Lysine 270 lines the substrate pocket. Mg(2+)-binding residues include lysine 293, aspartate 295, and glutamate 296. Lysine 293 is modified (N6-carboxylysine). Histidine 389 acts as the Proton acceptor in catalysis. Substrate is bound by residues arginine 390, histidine 423, and serine 470.

The protein belongs to the RuBisCO large chain family. Type II subfamily. In terms of assembly, homodimer. Requires Mg(2+) as cofactor.

The protein resides in the plastid. It localises to the chloroplast membrane. It carries out the reaction 2 (2R)-3-phosphoglycerate + 2 H(+) = D-ribulose 1,5-bisphosphate + CO2 + H2O. It catalyses the reaction D-ribulose 1,5-bisphosphate + O2 = 2-phosphoglycolate + (2R)-3-phosphoglycerate + 2 H(+). In terms of biological role, ruBisCO catalyzes two reactions: the carboxylation of D-ribulose 1,5-bisphosphate, the primary event in carbon dioxide fixation, as well as the oxidative fragmentation of the pentose substrate. Both reactions occur simultaneously and in competition at the same active site. This chain is Ribulose bisphosphate carboxylase, chloroplastic (rbcL), found in Heterocapsa triquetra (Dinoflagellate).